The sequence spans 186 residues: Putative adenylate kinase (186 aa).

Residues G10, G12, K13, T14, and S15 each coordinate ATP. Residues 30–53 (HLNELIKEEHLYTEVDEKRDSVVA) form an NMP region. Residues 108 to 118 (KRGYSEEKVNE) form an LID region. R109 provides a ligand contact to ATP.

Belongs to the adenylate kinase family. AK6 subfamily. In terms of assembly, interacts with uS11. Not a structural component of 40S pre-ribosomes, but transiently interacts with them by binding to uS11.

The enzyme catalyses AMP + ATP = 2 ADP. The catalysed reaction is ATP + H2O = ADP + phosphate + H(+). In terms of biological role, broad-specificity nucleoside monophosphate (NMP) kinase that catalyzes the reversible transfer of the terminal phosphate group between nucleoside triphosphates and monophosphates. Also has ATPase activity. Involved in the late maturation steps of the 30S ribosomal particles, specifically 16S rRNA maturation. While NMP activity is not required for ribosome maturation, ATPase activity is. Associates transiently with small ribosomal subunit protein uS11. ATP hydrolysis breaks the interaction with uS11. May temporarily remove uS11 from the ribosome to enable a conformational change of the ribosomal RNA that is needed for the final maturation step of the small ribosomal subunit. The protein is Putative adenylate kinase of Methanosarcina acetivorans (strain ATCC 35395 / DSM 2834 / JCM 12185 / C2A).